We begin with the raw amino-acid sequence, 468 residues long: Argininosuccinate lyase (468 aa).

The protein belongs to the lyase 1 family. Argininosuccinate lyase subfamily.

The protein resides in the cytoplasm. It carries out the reaction 2-(N(omega)-L-arginino)succinate = fumarate + L-arginine. Its pathway is amino-acid biosynthesis; L-arginine biosynthesis; L-arginine from L-ornithine and carbamoyl phosphate: step 3/3. This Sphingopyxis alaskensis (strain DSM 13593 / LMG 18877 / RB2256) (Sphingomonas alaskensis) protein is Argininosuccinate lyase.